Reading from the N-terminus, the 230-residue chain is UPF0494 membrane protein PB2B2.14c (230 aa).

Helical transmembrane passes span 78–98, 120–140, and 148–168; these read WPLL…NFEV, IWGP…GLIY, and AIPL…VAMV.

The protein belongs to the UPF0494 family.

Its subcellular location is the membrane. This chain is UPF0494 membrane protein PB2B2.14c, found in Schizosaccharomyces pombe (strain 972 / ATCC 24843) (Fission yeast).